Reading from the N-terminus, the 145-residue chain is Peptide methionine sulfoxide reductase MsrB (145 aa).

A MsrB domain is found at 4 to 127 (SDELKQRIGD…NSAALKFIPY (124 aa)). The active-site Nucleophile is the Cys-116.

Belongs to the MsrB Met sulfoxide reductase family.

It catalyses the reaction L-methionyl-[protein] + [thioredoxin]-disulfide + H2O = L-methionyl-(R)-S-oxide-[protein] + [thioredoxin]-dithiol. In Streptococcus pyogenes serotype M18 (strain MGAS8232), this protein is Peptide methionine sulfoxide reductase MsrB.